The primary structure comprises 352 residues: UDP-N-acetylglucosamine--N-acetylmuramyl-(pentapeptide) pyrophosphoryl-undecaprenol N-acetylglucosamine transferase (352 aa).

UDP-N-acetyl-alpha-D-glucosamine-binding positions include 14 to 16 (TGG), asparagine 124, arginine 164, serine 185, and glutamine 285.

The protein belongs to the glycosyltransferase 28 family. MurG subfamily.

It localises to the cell inner membrane. It catalyses the reaction di-trans,octa-cis-undecaprenyl diphospho-N-acetyl-alpha-D-muramoyl-L-alanyl-D-glutamyl-meso-2,6-diaminopimeloyl-D-alanyl-D-alanine + UDP-N-acetyl-alpha-D-glucosamine = di-trans,octa-cis-undecaprenyl diphospho-[N-acetyl-alpha-D-glucosaminyl-(1-&gt;4)]-N-acetyl-alpha-D-muramoyl-L-alanyl-D-glutamyl-meso-2,6-diaminopimeloyl-D-alanyl-D-alanine + UDP + H(+). The protein operates within cell wall biogenesis; peptidoglycan biosynthesis. Its function is as follows. Cell wall formation. Catalyzes the transfer of a GlcNAc subunit on undecaprenyl-pyrophosphoryl-MurNAc-pentapeptide (lipid intermediate I) to form undecaprenyl-pyrophosphoryl-MurNAc-(pentapeptide)GlcNAc (lipid intermediate II). This is UDP-N-acetylglucosamine--N-acetylmuramyl-(pentapeptide) pyrophosphoryl-undecaprenol N-acetylglucosamine transferase from Chlamydia trachomatis serovar A (strain ATCC VR-571B / DSM 19440 / HAR-13).